The following is a 209-amino-acid chain: Xanthine phosphoribosyltransferase 1 (209 aa).

Ser79 carries the post-translational modification Phosphoserine.

It is found in the cytoplasm. May act as a xanthine phosphoribosyltransferase involved in the synthesis of purine nucleotides. Such activity is however unclear in vivo. This is Xanthine phosphoribosyltransferase 1 (XPT1) from Saccharomyces cerevisiae (strain ATCC 204508 / S288c) (Baker's yeast).